The following is a 168-amino-acid chain: NADH dehydrogenase [ubiquinone] 1 alpha subcomplex assembly factor 2 (168 aa).

The disordered stretch occupies residues 112–168; sequence GKETSEELLPSPTATQVKGHASAPYFGREEPSVAPTSTGKTFQPGSWTPEDGKRQSQ. At Ser-133 the chain carries Phosphoserine. Polar residues predominate over residues 145 to 157; sequence APTSTGKTFQPGS.

This sequence belongs to the complex I NDUFA12 subunit family. As to quaternary structure, interacts with ARMC9.

The protein resides in the mitochondrion. In terms of biological role, acts as a molecular chaperone for mitochondrial complex I assembly. Complex I functions in the transfer of electrons from NADH to the respiratory chain. The immediate electron acceptor for the enzyme is believed to be ubiquinone. Is involved in the initial steps of cilia formation, including removal of CP110 from the mother centrioles, docking of membrane vesicles to the mother centrioles, and establishment of the transition zone. This Mus musculus (Mouse) protein is NADH dehydrogenase [ubiquinone] 1 alpha subcomplex assembly factor 2 (Ndufaf2).